Reading from the N-terminus, the 165-residue chain is Pyruvoyl-dependent arginine decarboxylase (165 aa).

A Pyruvic acid (Ser) modification is found at Ser-53.

It belongs to the PdaD family. It depends on pyruvate as a cofactor.

It carries out the reaction L-arginine + H(+) = agmatine + CO2. This Methanococcus aeolicus (strain ATCC BAA-1280 / DSM 17508 / OCM 812 / Nankai-3) protein is Pyruvoyl-dependent arginine decarboxylase.